Reading from the N-terminus, the 464-residue chain is Secretion-regulating guanine nucleotide exchange factor (464 aa).

RCC1 repeat units follow at residues 14–66 (AAAL…VVTD), 68–118 (GSLF…ILTE), 119–170 (NGQV…AATA), 172–229 (GTVF…SLTD), 230–282 (AGEL…AQTV), 283–349 (TGKV…LAVI), and 350–401 (GGVC…ALCQ). Over residues 301-313 (VETREGWESEKQD) the composition is skewed to basic and acidic residues. The tract at residues 301 to 323 (VETREGWESEKQDPSLPGSGPQK) is disordered. The tract at residues 411–464 (HPSVTSPSPDATKEARSQEAMEQERNQKERHAETSPQAQSDRFRNGGLVAETLE) is disordered. The segment covering 421-443 (ATKEARSQEAMEQERNQKERHAE) has biased composition (basic and acidic residues). S427 is modified (phosphoserine).

As to quaternary structure, interacts with SEC5. The interaction occurs only in the presence of magnesium or manganese and is stimulated by dCTP or GTP.

The protein resides in the cytoplasm. It localises to the nucleus. Functionally, probable guanine nucleotide exchange factor (GEF), which may be involved in the secretion process. The chain is Secretion-regulating guanine nucleotide exchange factor (SERGEF) from Bos taurus (Bovine).